The primary structure comprises 131 residues: U-scoloptoxin-Er5e (131 aa).

The N-terminal stretch at 1-22 is a signal peptide; it reads MKTNCEFPLLCLLIVLVANVEG. Positions 23 to 94 are excised as a propeptide; the sequence is EVEDNELKMV…KRLWRNWERR (72 aa). RLWRNWE repeat units lie at residues 34-40, 61-67, and 86-92; these read RLWRNWE. Glutamine 95 carries the post-translational modification Pyrrolidone carboxylic acid. One copy of the RLWRNWE 4; approximate repeat lies at 107–113; it reads ELWRNWE. Positions 112–131 are excised as a propeptide; that stretch reads WEDLKRRQVVDLNDEQKTTG.

The protein belongs to the scoloptoxin-08 family. Expressed by the venom gland.

The protein localises to the secreted. This Ethmostigmus rubripes (Giant centipede) protein is U-scoloptoxin-Er5e.